The following is a 1024-amino-acid chain: Importin-8 (1024 aa).

The region spanning 22 to 102 is the Importin N-terminal domain; that stretch reads AENELNQSYK…RENMVEAIIR (81 aa). A disordered region spans residues 896 to 969; it reads FGRAQGSEEE…YSTPLDCDNG (74 aa). Acidic residues-rich tracts occupy residues 902–917 and 934–952; these read SEEE…EDEV and DNED…DEGL.

The protein belongs to the importin beta family.

It localises to the cytoplasm. Its subcellular location is the nucleus. Involved in nuclear protein import, either by acting as autonomous nuclear transport receptor or as an adapter-like protein in association with the importin-beta subunit KPNB1. Acting autonomously, may serve as receptor for nuclear localization signals (NLS) and promote translocation of import substrates through the nuclear pore complex (NPC) by an energy requiring, Ran-dependent mechanism. At the nucleoplasmic side of the NPC, Ran binds to importin, the importin/substrate complex dissociates and importin is re-exported from the nucleus to the cytoplasm where GTP hydrolysis releases Ran. The directionality of nuclear import is thought to be conferred by an asymmetric distribution of the GTP- and GDP-bound forms of Ran between the cytoplasm and nucleus. In vitro mediates the nuclear import of the signal recognition particle protein SRP19. May also be involved in cytoplasm-to-nucleus shuttling of a broad spectrum of other cargos, including Argonaute-microRNAs complexes, the JUN protein, RELA/NF-kappa-B p65 subunit, the translation initiation factor EIF4E and a set of receptor-activated mothers against decapentaplegic homolog (SMAD) transcription factors that play a critical role downstream of the large family of transforming growth factor beta and bone morphogenetic protein (BMP) cytokines. The polypeptide is Importin-8 (ipo8) (Danio rerio (Zebrafish)).